The following is a 187-amino-acid chain: Peptide deformylase (187 aa).

Residues cysteine 107 and histidine 149 each contribute to the Fe cation site. Residue glutamate 150 is part of the active site. Histidine 153 serves as a coordination point for Fe cation.

Belongs to the polypeptide deformylase family. It depends on Fe(2+) as a cofactor.

The enzyme catalyses N-terminal N-formyl-L-methionyl-[peptide] + H2O = N-terminal L-methionyl-[peptide] + formate. Functionally, removes the formyl group from the N-terminal Met of newly synthesized proteins. Requires at least a dipeptide for an efficient rate of reaction. N-terminal L-methionine is a prerequisite for activity but the enzyme has broad specificity at other positions. This is Peptide deformylase from Picosynechococcus sp. (strain ATCC 27264 / PCC 7002 / PR-6) (Agmenellum quadruplicatum).